A 314-amino-acid polypeptide reads, in one-letter code: Cyclin-dependent kinase 2 (314 aa).

The Protein kinase domain maps to Phe8 to Phe287. ATP-binding positions include Ile14–Val22 and Lys37. Thr18 bears the Phosphothreonine mark. Tyr19 is modified (phosphotyrosine). The Proton acceptor role is filled by Asp130. At Tyr162 the chain carries Phosphotyrosine. Residue Thr163 is modified to Phosphothreonine.

Belongs to the protein kinase superfamily. CMGC Ser/Thr protein kinase family. CDC2/CDKX subfamily. As to quaternary structure, interacts with cyclin CycG.

It catalyses the reaction L-seryl-[protein] + ATP = O-phospho-L-seryl-[protein] + ADP + H(+). It carries out the reaction L-threonyl-[protein] + ATP = O-phospho-L-threonyl-[protein] + ADP + H(+). The enzyme catalyses [DNA-directed RNA polymerase] + ATP = phospho-[DNA-directed RNA polymerase] + ADP + H(+). Functionally, like Cdk1, could play a key role in the control of the eukaryotic cell cycle. This Drosophila melanogaster (Fruit fly) protein is Cyclin-dependent kinase 2.